The chain runs to 188 residues: Segregation and condensation protein B (188 aa).

It belongs to the ScpB family. In terms of assembly, homodimer. Homodimerization may be required to stabilize the binding of ScpA to the Smc head domains. Component of a cohesin-like complex composed of ScpA, ScpB and the Smc homodimer, in which ScpA and ScpB bind to the head domain of Smc. The presence of the three proteins is required for the association of the complex with DNA.

The protein localises to the cytoplasm. Participates in chromosomal partition during cell division. May act via the formation of a condensin-like complex containing Smc and ScpA that pull DNA away from mid-cell into both cell halves. The polypeptide is Segregation and condensation protein B (Streptococcus gordonii (strain Challis / ATCC 35105 / BCRC 15272 / CH1 / DL1 / V288)).